The primary structure comprises 142 residues: Hemoglobin subunit alpha (142 aa).

The 141-residue stretch at 2-142 (VLSAADKGNV…VSTVLTSKYR (141 aa)) folds into the Globin domain. Position 4 is a phosphoserine (serine 4). Lysine 8 and lysine 12 each carry N6-succinyllysine. At lysine 17 the chain carries N6-acetyllysine; alternate. N6-succinyllysine; alternate is present on lysine 17. Tyrosine 25 carries the post-translational modification Phosphotyrosine. Serine 36 carries the post-translational modification Phosphoserine. Lysine 41 bears the N6-succinyllysine mark. Phosphoserine is present on serine 50. O2 is bound at residue histidine 59. Histidine 88 contacts heme b. At serine 103 the chain carries Phosphoserine. A Phosphothreonine modification is found at threonine 109. Residue serine 125 is modified to Phosphoserine. A phosphothreonine mark is found at threonine 135 and threonine 138. At serine 139 the chain carries Phosphoserine.

Belongs to the globin family. Heterotetramer of two alpha chains and two beta chains. Red blood cells.

In terms of biological role, involved in oxygen transport from the lung to the various peripheral tissues. Hemopressin acts as an antagonist peptide of the cannabinoid receptor CNR1. Hemopressin-binding efficiently blocks cannabinoid receptor CNR1 and subsequent signaling. The chain is Hemoglobin subunit alpha (HBA) from Bos gaurus frontalis (Domestic gayal).